The chain runs to 125 residues: Small ribosomal subunit protein uS13 (125 aa).

The disordered stretch occupies residues 97–125 (PVRGQKTRSNARTRKGPRPSRIKTKKKSS). Basic residues predominate over residues 101–125 (QKTRSNARTRKGPRPSRIKTKKKSS).

The protein belongs to the universal ribosomal protein uS13 family. As to quaternary structure, part of the 30S ribosomal subunit. Forms a loose heterodimer with protein S19. Forms two bridges to the 50S subunit in the 70S ribosome.

Its function is as follows. Located at the top of the head of the 30S subunit, it contacts several helices of the 16S rRNA. In the 70S ribosome it contacts the 23S rRNA (bridge B1a) and protein L5 of the 50S subunit (bridge B1b), connecting the 2 subunits; these bridges are implicated in subunit movement. Contacts the tRNAs in the A and P-sites. This Thermotoga neapolitana (strain ATCC 49049 / DSM 4359 / NBRC 107923 / NS-E) protein is Small ribosomal subunit protein uS13.